The following is a 175-amino-acid chain: Ribosome maturation factor RimM (175 aa).

Residues 98–175 (EGEYYWHQLE…EMRVDWDADF (78 aa)) enclose the PRC barrel domain.

The protein belongs to the RimM family. As to quaternary structure, binds ribosomal protein uS19.

It localises to the cytoplasm. Its function is as follows. An accessory protein needed during the final step in the assembly of 30S ribosomal subunit, possibly for assembly of the head region. Essential for efficient processing of 16S rRNA. May be needed both before and after RbfA during the maturation of 16S rRNA. It has affinity for free ribosomal 30S subunits but not for 70S ribosomes. The protein is Ribosome maturation factor RimM of Pseudomonas aeruginosa (strain ATCC 15692 / DSM 22644 / CIP 104116 / JCM 14847 / LMG 12228 / 1C / PRS 101 / PAO1).